The sequence spans 226 residues: Ribonuclease 3 (226 aa).

In terms of domain architecture, RNase III spans 7-129 (LPRLCRTLGY…IIGAIYLDSD (123 aa)). Glutamate 42 serves as a coordination point for Mg(2+). The active site involves aspartate 46. The Mg(2+) site is built by aspartate 115 and glutamate 118. Glutamate 118 is an active-site residue. A DRBM domain is found at 156–226 (DAKTLLQEYL…AAQVLELLKK (71 aa)).

This sequence belongs to the ribonuclease III family. In terms of assembly, homodimer. Requires Mg(2+) as cofactor.

It is found in the cytoplasm. The catalysed reaction is Endonucleolytic cleavage to 5'-phosphomonoester.. In terms of biological role, digests double-stranded RNA. Involved in the processing of primary rRNA transcript to yield the immediate precursors to the large and small rRNAs (23S and 16S). Processes some mRNAs, and tRNAs when they are encoded in the rRNA operon. Processes pre-crRNA and tracrRNA of type II CRISPR loci if present in the organism. This is Ribonuclease 3 from Shewanella sp. (strain MR-7).